The primary structure comprises 166 residues: Large ribosomal subunit protein uL10 (166 aa).

Belongs to the universal ribosomal protein uL10 family. In terms of assembly, part of the ribosomal stalk of the 50S ribosomal subunit. The N-terminus interacts with L11 and the large rRNA to form the base of the stalk. The C-terminus forms an elongated spine to which L12 dimers bind in a sequential fashion forming a multimeric L10(L12)X complex.

In terms of biological role, forms part of the ribosomal stalk, playing a central role in the interaction of the ribosome with GTP-bound translation factors. The protein is Large ribosomal subunit protein uL10 of Pseudomonas fluorescens (strain ATCC BAA-477 / NRRL B-23932 / Pf-5).